The sequence spans 535 residues: Major glycerophosphoinositol permease GIT3 (535 aa).

The chain crosses the membrane as a helical span at residues 49-69 (VVTSVKANSLWPAFASGAGLF). The N-linked (GlcNAc...) asparagine glycan is linked to N75. Transmembrane regions (helical) follow at residues 101 to 121 (NIAS…GYIS), 137 to 157 (LIFF…QGFF), 165 to 185 (FFLG…ASEF), 204 to 224 (AMID…IWIF), and 232 to 252 (LWRV…FMRL). N-linked (GlcNAc...) asparagine glycosylation is present at N256. The next 6 helical transmembrane spans lie at 275–295 (WWLI…IWFI), 324–344 (WGWS…GAIS), 352–372 (LTLA…SACL), 378–398 (HIAG…FGPG), 419–439 (GIAA…FPAI), and 455–475 (VPFY…IFFC). An N-linked (GlcNAc...) asparagine glycan is attached at N532.

Belongs to the major facilitator superfamily. Sugar transporter (TC 2.A.1.1) family.

Its subcellular location is the cell membrane. The catalysed reaction is sn-glycerol 3-phosphocholine(out) = sn-glycerol 3-phosphocholine(in). Glycerophosphodiester transporter that mediates uptake of glycerophosphocholine (GroPCho) with GIT4. GIT3 acts as the major GroPCho permease. Does not possess detectable glycerophosphoinositol (GroPIns) transport activity. The expanded ability to utilize GroPIns and GroPCho results from the organism's pathogenic nature and its need to occupy a variety of environments within its host organism. This possibility is buttressed by the fact that GroPIns and GroPCho are present and abundant in human fluids. The protein is Major glycerophosphoinositol permease GIT3 of Candida albicans (strain SC5314 / ATCC MYA-2876) (Yeast).